Reading from the N-terminus, the 310-residue chain is tRNA uridine(34) hydroxylase (310 aa).

Positions 127 to 225 constitute a Rhodanese domain; sequence KDKNTIVVDT…YLEDMSKEES (99 aa). Cysteine 185 serves as the catalytic Cysteine persulfide intermediate.

This sequence belongs to the TrhO family.

The catalysed reaction is uridine(34) in tRNA + AH2 + O2 = 5-hydroxyuridine(34) in tRNA + A + H2O. In terms of biological role, catalyzes oxygen-dependent 5-hydroxyuridine (ho5U) modification at position 34 in tRNAs. The chain is tRNA uridine(34) hydroxylase from Prochlorococcus marinus subsp. pastoris (strain CCMP1986 / NIES-2087 / MED4).